A 100-amino-acid chain; its full sequence is MLGSPLREYELLVSLGSEFEPEAESRVRSLFTPVEPEGVTVKHLDVLGVRKFAYEIKGRNDGVCVVVRLLANAGSIAEIGRQMRLTEDVIRTKLLRVGRK.

It belongs to the bacterial ribosomal protein bS6 family.

Functionally, binds together with bS18 to 16S ribosomal RNA. In Tropheryma whipplei (strain TW08/27) (Whipple's bacillus), this protein is Small ribosomal subunit protein bS6.